A 218-amino-acid chain; its full sequence is Runt-related transcription factor 2 (218 aa).

The region spanning 67–195 (RGHKFYLEKK…TVDGPREPRR (129 aa)) is the Runt domain. A required for interaction with FOXO1 region spans residues 122–138 (VMAGNDENYSAELRNAS). A disordered region spans residues 189–218 (GPREPRRHRQKLDDSKPSLFSDRLSDLGRI). K204 participates in a covalent cross-link: Glycyl lysine isopeptide (Lys-Gly) (interchain with G-Cter in SUMO2).

As to quaternary structure, heterodimer of an alpha and a beta subunit. The alpha subunit binds DNA as a monomer and through the Runt domain. DNA-binding is increased by heterodimerization. Interacts with XRCC6 (Ku70) and XRCC5 (Ku80). Interacts with CCNB1, KAT6A and KAT6B. Interacts with HIVEP3. Interacts with IFI204. Interaction with SATB2; the interaction results in enhanced DNA binding and transactivation by these transcription factors. Binds to HIPK3. Interacts with FOXO1 (via a C-terminal region); the interaction inhibits RUNX2 transcriptional activity towards BGLAP. Interacts with FOXP3. Interacts with TMEM119. Interacts with OLFM2. Interacts with IPO7; the interaction inhibits RUNX2 nuclear translocation in osteoblasts. In terms of processing, phosphorylated; probably by MAP kinases (MAPK). Phosphorylation by HIPK3 is required for the SPEN/MINT and FGF2 transactivation during osteoblastic differentiation.

It is found in the nucleus. Its subcellular location is the cytoplasm. Its function is as follows. Transcription factor involved in osteoblastic differentiation and skeletal morphogenesis. Essential for the maturation of osteoblasts and both intramembranous and endochondral ossification. CBF binds to the core site, 5'-PYGPYGGT-3', of a number of enhancers and promoters, including murine leukemia virus, polyomavirus enhancer, T-cell receptor enhancers, osteocalcin, osteopontin, bone sialoprotein, alpha 1(I) collagen, LCK, IL-3 and GM-CSF promoters. Inhibits KAT6B-dependent transcriptional activation. In osteoblasts, supports transcription activation: synergizes with SPEN/MINT to enhance FGFR2-mediated activation of the osteocalcin FGF-responsive element (OCFRE). This is Runt-related transcription factor 2 (Runx2) from Rattus norvegicus (Rat).